Here is a 357-residue protein sequence, read N- to C-terminus: Glutamine synthetase root isozyme 5 (357 aa).

A GS beta-grasp domain is found at 19–99 (IIAEYIWVGG…VMCDCYTPQG (81 aa)). One can recognise a GS catalytic domain in the interval 106 to 357 (KRYKAATVFS…ADTTILWKGN (252 aa)).

The protein belongs to the glutamine synthetase family. Homooctamer. Found mainly in the cortical tissues of seedling roots, stem and seedling shoot.

The protein localises to the cytoplasm. The enzyme catalyses L-glutamate + NH4(+) + ATP = L-glutamine + ADP + phosphate + H(+). Functionally, plays a role in the flow of nitrogen into nitrogenous organic compounds. The protein is Glutamine synthetase root isozyme 5 (GS1-5) of Zea mays (Maize).